We begin with the raw amino-acid sequence, 174 residues long: Nicotinamide-nucleotide adenylyltransferase (174 aa).

This sequence belongs to the archaeal NMN adenylyltransferase family.

It localises to the cytoplasm. It carries out the reaction beta-nicotinamide D-ribonucleotide + ATP + H(+) = diphosphate + NAD(+). The protein operates within cofactor biosynthesis; NAD(+) biosynthesis; NAD(+) from nicotinamide D-ribonucleotide: step 1/1. In Methanospirillum hungatei JF-1 (strain ATCC 27890 / DSM 864 / NBRC 100397 / JF-1), this protein is Nicotinamide-nucleotide adenylyltransferase.